The chain runs to 734 residues: Homoaconitase, mitochondrial (734 aa).

A mitochondrion-targeting transit peptide spans 1 to 25 (MGASNLLRFGAVTRISTPLLSRRSL). Cys-367, Cys-427, and Cys-430 together coordinate [4Fe-4S] cluster.

The protein belongs to the aconitase/IPM isomerase family. [4Fe-4S] cluster is required as a cofactor.

Its subcellular location is the mitochondrion. The catalysed reaction is (2R,3S)-homoisocitrate = cis-homoaconitate + H2O. It participates in amino-acid biosynthesis; L-lysine biosynthesis via AAA pathway; L-alpha-aminoadipate from 2-oxoglutarate: step 3/5. Functionally, catalyzes the reversible hydration of cis-homoaconitate to (2R,3S)-homoisocitrate, a step in the alpha-aminoadipate pathway for lysine biosynthesis. This Mycosarcoma maydis (Corn smut fungus) protein is Homoaconitase, mitochondrial (LYS4).